The chain runs to 79 residues: RNA-binding protein Hfq (79 aa).

The region spanning 10 to 70 (DVFLKTVRKQ…ISTIMPGQPI (61 aa)) is the Sm domain.

This sequence belongs to the Hfq family. In terms of assembly, homohexamer.

Its function is as follows. RNA chaperone that binds small regulatory RNA (sRNAs) and mRNAs to facilitate mRNA translational regulation in response to envelope stress, environmental stress and changes in metabolite concentrations. Also binds with high specificity to tRNAs. The polypeptide is RNA-binding protein Hfq (Bartonella bacilliformis (strain ATCC 35685 / KC583 / Herrer 020/F12,63)).